The primary structure comprises 224 residues: Toxin coregulated pilin (224 aa).

The propeptide at 1 to 25 is atypical leader sequence; that stretch reads MQLLKQLFKKKFVKEEHDKKTGQEG. The residue at position 26 (Met-26) is an N-methylmethionine. Residues 26-46 traverse the membrane as a helical segment; sequence MTLLEVIIVLGIMGVVSAGVV. Cys-145 and Cys-211 are joined by a disulfide.

Its subcellular location is the fimbrium. It localises to the membrane. Its function is as follows. Major component of the toxin co-regulated pilus (tcp) which is a type IV pilus essential for bacterial aggregation and subsequent colonization in the host small intestine. The chain is Toxin coregulated pilin (tcpA) from Vibrio cholerae serotype O1 (strain ATCC 39315 / El Tor Inaba N16961).